Consider the following 896-residue polypeptide: Alanine--tRNA ligase (896 aa).

The segment covering 439-456 (QRAKDDAKAKKGQHRDAS) has biased composition (basic and acidic residues). Residues 439-459 (QRAKDDAKAKKGQHRDASAYR) form a disordered region. Positions 579, 583, 681, and 685 each coordinate Zn(2+).

The protein belongs to the class-II aminoacyl-tRNA synthetase family. Zn(2+) is required as a cofactor.

The protein resides in the cytoplasm. The enzyme catalyses tRNA(Ala) + L-alanine + ATP = L-alanyl-tRNA(Ala) + AMP + diphosphate. Catalyzes the attachment of alanine to tRNA(Ala) in a two-step reaction: alanine is first activated by ATP to form Ala-AMP and then transferred to the acceptor end of tRNA(Ala). Also edits incorrectly charged Ser-tRNA(Ala) and Gly-tRNA(Ala) via its editing domain. This is Alanine--tRNA ligase from Nocardioides sp. (strain ATCC BAA-499 / JS614).